We begin with the raw amino-acid sequence, 229 residues long: DNA mismatch repair protein MutH (229 aa).

The protein belongs to the MutH family.

Its subcellular location is the cytoplasm. Functionally, sequence-specific endonuclease that cleaves unmethylated GATC sequences. It is involved in DNA mismatch repair. The polypeptide is DNA mismatch repair protein MutH (Escherichia coli O17:K52:H18 (strain UMN026 / ExPEC)).